Consider the following 565-residue polypeptide: Sodium/hydrogen exchanger 9B1 (565 aa).

2 stretches are compositionally biased toward basic and acidic residues: residues 1–14 and 23–86; these read MSEH…KDDG and MSKD…ETQT. A disordered region spans residues 1–112; it reads MSEHDVESNK…RGTNSYCPPQ (112 aa). Helical transmembrane passes span 122–142, 146–166, 167–187, 206–223, 238–258, 266–286, 311–331, 341–361, 371–391, 419–439, 449–469, 482–502, and 523–543; these read GAAL…EVLP, LFGL…LEFI, KIPV…GFTI, ALRN…GLGL, LSFG…HFIM, FLLG…NMLM, IVAI…GSVI, VLIG…FPSG, AFLV…IGLH, IVAN…GTEV, IGMC…STFV, VFIA…GPLA, and VAFL…GILG.

Belongs to the monovalent cation:proton antiporter 1 (CPA1) transporter (TC 2.A.36) family. As to expression, testis-specific. Expressed in the spermatids and spermatozoa (at protein level). Specifically present in the principal piece of sperm tail (at protein level).

It is found in the cell projection. The protein resides in the cilium. It localises to the flagellum membrane. Its function is as follows. Sperm-specific Na(+)/H(+) exchanger involved in intracellular pH regulation of spermatozoa. Involved in sperm motility and fertility. The chain is Sodium/hydrogen exchanger 9B1 from Mus musculus (Mouse).